The sequence spans 382 residues: Cell division cycle-associated protein 7 (382 aa).

Disordered regions lie at residues 68–118 and 151–217; these read PLRV…EDGM and GRHS…EDKY. Residues 105–117 show a composition bias toward acidic residues; that stretch reads SEEEEEEEEEEDG. The segment at 152–177 is interaction with MYC; it reads RHSLPGHRAKDSKSPRRRTFPGVATR. The short motif at 167 to 183 is the Nuclear localization signal element; it reads RRRTFPGVATRRNPERR. At T170 the chain carries Phosphothreonine. Position 197 is a phosphoserine (S197). T203 carries the post-translational modification Phosphothreonine. The span at 203–215 shows a compositional bias: acidic residues; that stretch reads TEEEEEEEEEEED. Residue K216 forms a Glycyl lysine isopeptide (Lys-Gly) (interchain with G-Cter in SUMO2) linkage. Phosphoserine is present on S225. Positions 258–382 are mediates transcriptional activity; that stretch reads EEEIRNICSN…SLKQEFEMQA (125 aa).

As to quaternary structure, interacts with MYC (via C-terminus), YWHAE and YWHAZ. Post-translationally, phosphorylation at Thr-170 promotes interaction with YWHAE and YWHAZ, dissociation from MYC and sequestration in the cytoplasm.

Its subcellular location is the nucleus. It localises to the cytoplasm. Participates in MYC-mediated cell transformation and apoptosis; induces anchorage-independent growth and clonogenicity in lymphoblastoid cells. Insufficient to induce tumorigenicity when overexpressed but contributes to MYC-mediated tumorigenesis. May play a role as transcriptional regulator. The sequence is that of Cell division cycle-associated protein 7 (Cdca7) from Mus musculus (Mouse).